The sequence spans 306 residues: Homoserine O-acetyltransferase (306 aa).

Catalysis depends on Cys-142, which acts as the Acyl-thioester intermediate. Residues Lys-163 and Ser-192 each contribute to the substrate site. The Proton acceptor role is filled by His-235. Glu-237 is an active-site residue. Residue Arg-249 coordinates substrate.

The protein belongs to the MetA family.

It is found in the cytoplasm. The catalysed reaction is L-homoserine + acetyl-CoA = O-acetyl-L-homoserine + CoA. It participates in amino-acid biosynthesis; L-methionine biosynthesis via de novo pathway; O-acetyl-L-homoserine from L-homoserine: step 1/1. Transfers an acetyl group from acetyl-CoA to L-homoserine, forming acetyl-L-homoserine. The protein is Homoserine O-acetyltransferase of Clostridium botulinum (strain Alaska E43 / Type E3).